A 257-amino-acid polypeptide reads, in one-letter code: Ribosomal RNA small subunit methyltransferase J (257 aa).

S-adenosyl-L-methionine is bound by residues 107-108 (RD), 123-124 (ER), and D177.

The protein belongs to the methyltransferase superfamily. RsmJ family.

Its subcellular location is the cytoplasm. The catalysed reaction is guanosine(1516) in 16S rRNA + S-adenosyl-L-methionine = N(2)-methylguanosine(1516) in 16S rRNA + S-adenosyl-L-homocysteine + H(+). Specifically methylates the guanosine in position 1516 of 16S rRNA. This is Ribosomal RNA small subunit methyltransferase J from Haemophilus influenzae (strain PittEE).